The chain runs to 474 residues: 3-isopropylmalate dehydratase large subunit (474 aa).

Cys355, Cys415, and Cys418 together coordinate [4Fe-4S] cluster.

The protein belongs to the aconitase/IPM isomerase family. LeuC type 1 subfamily. In terms of assembly, heterodimer of LeuC and LeuD. Requires [4Fe-4S] cluster as cofactor.

It carries out the reaction (2R,3S)-3-isopropylmalate = (2S)-2-isopropylmalate. The protein operates within amino-acid biosynthesis; L-leucine biosynthesis; L-leucine from 3-methyl-2-oxobutanoate: step 2/4. Its function is as follows. Catalyzes the isomerization between 2-isopropylmalate and 3-isopropylmalate, via the formation of 2-isopropylmaleate. This is 3-isopropylmalate dehydratase large subunit from Shewanella putrefaciens (strain CN-32 / ATCC BAA-453).